We begin with the raw amino-acid sequence, 245 residues long: Fibroblast growth factor 13 (245 aa).

Residues 1 to 36 (MAAAIASSLIRQKRQAREREKSNACKCVSSPSKGKT) are disordered. Positions 1–62 (MAAAIASSLI…GSKKRRRRRP (62 aa)) are mediates targeting to the nucleus. Residues 67–201 (KGIVTKLYSR…AHFLPKPLKV (135 aa)) form a mediates interaction with sodium channels region. The interval 157–164 (SMIYRQQQ) is tubulin-binding domain necessary and sufficient for tubulin-binding. Ser208 is modified (phosphoserine). The tract at residues 213-245 (TEFSRSGSGTPTKSRSVSGVLNGGKSMSHNEST) is disordered. Residues 215-245 (FSRSGSGTPTKSRSVSGVLNGGKSMSHNEST) show a composition bias toward polar residues.

It belongs to the heparin-binding growth factors family. Interacts with SCN8A; regulates SCN8A activity. Interacts with SCN1A; may regulate SCN1A activity. Interacts with SCN5A; the interaction is direct and may regulate SNC5A density at membranes and function. May also interact with SCN2A and SCN11A. Interacts with MAPK8IP2; may regulate the MAPK8IP2 scaffolding activity. May be phosphorylated. Detected in brain, eye and heart. In brain, the different isoforms display different patterns of expression. Expressed in brain and heart (at protein level). Isoform 3 is highly expressed in cardiac myocytes while isoform 1 is the most abundant in brain.

It is found in the cell projection. Its subcellular location is the filopodium. It localises to the growth cone. The protein resides in the dendrite. The protein localises to the cell membrane. It is found in the sarcolemma. Its subcellular location is the cytoplasm. It localises to the nucleus. In terms of biological role, microtubule-binding protein which directly binds tubulin and is involved in both polymerization and stabilization of microtubules. Through its action on microtubules, may participate to the refinement of axons by negatively regulating axonal and leading processes branching. Plays a crucial role in neuron polarization and migration in the cerebral cortex and the hippocampus. Regulates voltage-gated sodium channel transport and function. May also play a role in MAPK signaling. Required for the development of axonal initial segment-targeting inhibitory GABAergic synapses made by chandelier neurons. Functionally, seems not to be involved in neuroblast polarization and migration but regulates axon branching. The protein is Fibroblast growth factor 13 of Mus musculus (Mouse).